The chain runs to 186 residues: MRALIIVDVQNDFCEGGSLAVTGGAALARAISDYLAEAADYHHVVATKDFHIDPGDHFSGTPDYSSSWPPHCVSGTPGADFHPSLDTSAIEAVFYKGAYTGAYSGFEGVDENGTPLLNWLRQRGVDEVDVVGIATDHCVRQTAEDAVRNGLATRVLVDLTAGVSADTTVAALEEMRTASVELVCSS.

The Proton acceptor role is filled by aspartate 8. The Fe cation site is built by aspartate 49, histidine 51, histidine 57, and histidine 71. Lysine 96 is a catalytic residue. Catalysis depends on cysteine 138, which acts as the Nucleophile.

This sequence belongs to the isochorismatase family. In terms of assembly, monomer. Requires Mn(2+) as cofactor. Fe(2+) serves as cofactor.

The enzyme catalyses nicotinamide + H2O = nicotinate + NH4(+). The catalysed reaction is pyrazinamide + H2O = pyrazine-2-carboxylate + NH4(+). The protein operates within cofactor biosynthesis; nicotinate biosynthesis; nicotinate from nicotinamide: step 1/1. Is inhibited by Cu(2+), Zn(2+) and Fe(3+). Functionally, catalyzes the deamidation of nicotinamide (NAM) into nicotinate. Likely functions in the cyclical salvage pathway for production of NAD from nicotinamide. Its function is as follows. Is involved in the activation of the first-line antituberculous drug pyrazinamide (PZA) by converting it into the active form, pyrazinoic acid. The protein is Nicotinamidase/pyrazinamidase of Mycobacterium tuberculosis (strain ATCC 25618 / H37Rv).